Consider the following 235-residue polypeptide: Caveolin-1 (235 aa).

Over 1 to 161 (MSTEQDIKTE…LVSLLALPFT (161 aa)) the chain is Cytoplasmic. The disordered stretch occupies residues 29–72 (GEAVVAPEEPKPKKNWFTFGKKKAAPTDETNIEEGGAPGDEPVK). The helical intramembrane region spans 162 to 182 (IIFAIFFGLLASINVFIIVPL). Residues 183-235 (GKLLSIPGTLLAKLWNWLIHAIFDPIASAVGLIFSNFNIRKYGINQETTAPCV) are Cytoplasmic-facing. C234 carries the S-palmitoyl cysteine lipid modification.

Belongs to the caveolin family. Homooligomer containing 14-16 monomers per oligomer.

The protein resides in the golgi apparatus membrane. It is found in the cell membrane. Its subcellular location is the membrane. It localises to the caveola. In terms of biological role, may act as a scaffolding protein within caveolar membranes. Interacts directly with G-protein alpha subunits and can functionally regulate their activity. This Caenorhabditis elegans protein is Caveolin-1 (cav-1).